Here is a 130-residue protein sequence, read N- to C-terminus: Ribonuclease VapC4 (130 aa).

The 124-residue stretch at 7 to 130 (LADTSVFIGI…AMPDVEVITI (124 aa)) folds into the PINc domain. Mg(2+) is bound by residues Asp-9 and Asp-98.

It belongs to the PINc/VapC protein family. As to quaternary structure, interacts with cognate antitoxin VapB4. It depends on Mg(2+) as a cofactor.

The protein localises to the secreted. Its function is as follows. Toxic component of a type II toxin-antitoxin (TA) system. Probably exerts its toxic effect by binding to mRNA, inhibiting translation. Binds to, recognizes and cleaves ssRNA at ACGC and AC(A/U)GC sequences, usually between the G and C; cleavage is not very efficient, nor is cleavage required to inhibit protein synthesis. Upon expression in situ, in M.smegmatis or E.coli inhibits cell growth and colony formation; in at least E.coli also causes increased levels of cellular RNA. Its toxic effect is neutralized by coexpression with cognate antitoxin VapB4. The protein is Ribonuclease VapC4 of Mycobacterium tuberculosis (strain ATCC 25618 / H37Rv).